Reading from the N-terminus, the 279-residue chain is MQKYLEKANVLIEALPYIRKFNSKIILIKYGGSAMENEELKHCVMQDIALLKLVGLKPIIVHGGGKDISAMCEKLGVKSEFKNGLRVSDKATTEVASMVLNHINKNLVHSLQNLGVKAIGLCGKDGALLECVKKDENLAFVGTIQKVNSKILEELLEKDFLPIIAPIGMDENFNTYNINADDAACAIAKALRAEKLAFLTDTAGLYEDFNDKNSLISKISLEQAKILAPKIEGGMHVKLKSCIDACENGVKKVHILDGRVKHSLLLEFFTDEGIGTLVG.

Residues glycine 64 to glycine 65, arginine 86, and asparagine 177 each bind substrate.

This sequence belongs to the acetylglutamate kinase family. ArgB subfamily.

Its subcellular location is the cytoplasm. The enzyme catalyses N-acetyl-L-glutamate + ATP = N-acetyl-L-glutamyl 5-phosphate + ADP. It participates in amino-acid biosynthesis; L-arginine biosynthesis; N(2)-acetyl-L-ornithine from L-glutamate: step 2/4. Functionally, catalyzes the ATP-dependent phosphorylation of N-acetyl-L-glutamate. The polypeptide is Acetylglutamate kinase (Campylobacter jejuni subsp. jejuni serotype O:23/36 (strain 81-176)).